Reading from the N-terminus, the 235-residue chain is tRNA (adenine(37)-N6)-methyltransferase (235 aa).

Positions 6 to 147 constitute a TsaA-like domain; that stretch reads FEQIGVIRSP…YLPFAESLPD (142 aa). S-adenosyl-L-methionine-binding positions include 23–25, 64–65, arginine 92, and 127–130; these read PRQ, HQ, and VDGT.

The protein belongs to the tRNA methyltransferase O family. As to quaternary structure, homodimer.

It catalyses the reaction N(6)-L-threonylcarbamoyladenosine(37) in tRNA + S-adenosyl-L-methionine = N(6)-methyl,N(6)-L-threonylcarbamoyladenosine(37) in tRNA + S-adenosyl-L-homocysteine + H(+). Functionally, S-adenosyl-L-methionine-dependent methyltransferase responsible for the addition of the methyl group in the formation of N6-methyl-N6-threonylcarbamoyladenosine at position 37 (m(6)t(6)A37) of the tRNA anticodon loop of tRNA(Thr)(GGU) that read codons starting with adenosine. The methyl group of m(6)t(6)A37 appears to slightly improve the efficiency of the tRNA decoding ability. This Escherichia coli (strain K12) protein is tRNA (adenine(37)-N6)-methyltransferase.